We begin with the raw amino-acid sequence, 466 residues long: Glutamate--tRNA ligase (466 aa).

Residues 10-20 (PSPTGYLHVGG) carry the 'HIGH' region motif. 4 residues coordinate Zn(2+): Cys99, Cys101, Cys126, and His128. The 'KMSKS' region motif lies at 237–241 (RLSKR). Lys240 is an ATP binding site.

The protein belongs to the class-I aminoacyl-tRNA synthetase family. Glutamate--tRNA ligase type 1 subfamily. Monomer. Requires Zn(2+) as cofactor.

It localises to the cytoplasm. It carries out the reaction tRNA(Glu) + L-glutamate + ATP = L-glutamyl-tRNA(Glu) + AMP + diphosphate. Its function is as follows. Catalyzes the attachment of glutamate to tRNA(Glu) in a two-step reaction: glutamate is first activated by ATP to form Glu-AMP and then transferred to the acceptor end of tRNA(Glu). The polypeptide is Glutamate--tRNA ligase (Trichlorobacter lovleyi (strain ATCC BAA-1151 / DSM 17278 / SZ) (Geobacter lovleyi)).